Here is a 176-residue protein sequence, read N- to C-terminus: SDIAKDKAARLLKKRGSISSLGSHDVKPRGSFSKTKDSVSTVSYIDEPGHHDDIQRPAILVENTYQMGPTKRFPVASVNNILKDVLTSYLQEEKYEAELCRQMTKTISEVIKARVKDLMIPRYKIIVLIYIGQLNDQGMRVGSRCIWDPANDTFSSYSFKNSSLFALANVYGVYYE.

Belongs to the dynein light chain Tctex-type family.

This Xenopus laevis (African clawed frog) protein is Dynein light chain Tctex-type 5-B (Dynlt5-b).